A 322-amino-acid chain; its full sequence is MTHLNAFSSVEHSTVLLHETVDGLALKENGIYIDGTFGRGGHSRLILSKLSANGKLIAIDRDPKAVAEAQKIQDPRFQIEHNTFSEILSICEKRGLVGKIDGILLDLGVSSPQLDDAARGFSFMKDGPLDMRMDDSKGISAAEWLQQVSEQDLAWVLKTFGEERFAKKIAKAIVNYNKSAVQNGSEFLTRTLQLAELIAHTVPFKDKHKHPATRSFQAIRIFINAELDELEKVLQSALTVLAPAGRLSVISFHSLEDRMVKHFMRKQSQGREIPKGLPLREDQIQRNQTLKVIGKAIMPTDAEIAQNPRARSAVLRVAERLN.

S-adenosyl-L-methionine-binding positions include 40–42, Asp-60, Phe-84, Asp-106, and Gln-113; that span reads GGH.

Belongs to the methyltransferase superfamily. RsmH family.

The protein resides in the cytoplasm. It carries out the reaction cytidine(1402) in 16S rRNA + S-adenosyl-L-methionine = N(4)-methylcytidine(1402) in 16S rRNA + S-adenosyl-L-homocysteine + H(+). Specifically methylates the N4 position of cytidine in position 1402 (C1402) of 16S rRNA. This chain is Ribosomal RNA small subunit methyltransferase H, found in Aggregatibacter aphrophilus (strain NJ8700) (Haemophilus aphrophilus).